The following is a 336-amino-acid chain: Glyceraldehyde-3-phosphate dehydrogenase 1 (336 aa).

NAD(+) is bound by residues 12-13 (RI), Asp-34, and Ser-120. Residues 150 to 152 (SCT), Thr-181, Arg-198, 211 to 212 (TG), and Arg-234 each bind D-glyceraldehyde 3-phosphate. Catalysis depends on Cys-151, which acts as the Nucleophile. Asn-316 lines the NAD(+) pocket.

It belongs to the glyceraldehyde-3-phosphate dehydrogenase family. As to quaternary structure, homotetramer.

The protein localises to the cytoplasm. The catalysed reaction is D-glyceraldehyde 3-phosphate + phosphate + NAD(+) = (2R)-3-phospho-glyceroyl phosphate + NADH + H(+). Its pathway is carbohydrate degradation; glycolysis; pyruvate from D-glyceraldehyde 3-phosphate: step 1/5. Functionally, catalyzes the oxidative phosphorylation of glyceraldehyde 3-phosphate (G3P) to 1,3-bisphosphoglycerate (BPG) using the cofactor NAD. The first reaction step involves the formation of a hemiacetal intermediate between G3P and a cysteine residue, and this hemiacetal intermediate is then oxidized to a thioester, with concomitant reduction of NAD to NADH. The reduced NADH is then exchanged with the second NAD, and the thioester is attacked by a nucleophilic inorganic phosphate to produce BPG. This chain is Glyceraldehyde-3-phosphate dehydrogenase 1 (gapA1), found in Staphylococcus epidermidis (strain ATCC 35984 / DSM 28319 / BCRC 17069 / CCUG 31568 / BM 3577 / RP62A).